Reading from the N-terminus, the 424-residue chain is MPLLWKRGFLLVICWIIVRSSPTPGSEGHSSVADCPSCALTTLSKDVPSSQPEMVEAVKKHILNMLHLRDRPNITQPVPKAALLNATKKLHVGKVGDDGYVEIEDDVGRRAEMNEVVEQTSEIITFAESGTPKKTLHFEISKEGSELSVVEHAEVWLFLKVSKANRSRTKVTIRLFQQQRQPKGNSEAAEDMEDMGLKGERSETLISEKAVDARKSTWHIFPISSSVQRLLDQGQSSLDVRIACDLCQETGASLVLLGKKKKKEDDGEGKEKDGGELTGEEEKEQSHRPFLMMLARHSEDRQHRRRERGLECDGKVNICCKKQFFVSFKDIGWSDWIIAPTGYHANYCEEECPSHIAGTSGSSLSFHSTVINHYRMRGHSPFANLKSCCVPTKLRPMSMLYYDDGQNIIKKDIQNMIVEECGCS.

An N-terminal signal peptide occupies residues 1–20 (MPLLWKRGFLLVICWIIVRS). A propeptide spanning residues 21-308 (SPTPGSEGHS…EDRQHRRRER (288 aa)) is cleaved from the precursor. The N-linked (GlcNAc...) asparagine glycan is linked to N165. Disordered regions lie at residues 178–200 (QQRQPKGNSEAAEDMEDMGLKGE) and 260–288 (KKKKEDDGEGKEKDGGELTGEEEKEQSHR). The span at 263–275 (KEDDGEGKEKDGG) shows a compositional bias: basic and acidic residues. Disulfide bonds link C312–C320, C319–C389, C348–C421, and C352–C423.

It belongs to the TGF-beta family. As to quaternary structure, dimeric, linked by one or more disulfide bonds. Inhibin A is a dimer of alpha and beta-A. Inhibin B is a dimer of alpha and beta-B. Activin A is a homodimer of beta-A. Activin B is a homodimer of beta-B. Activin AB is a dimer of beta-A and beta-B. Ciliary ganglion neurons. Levels are higher in the choroid than the iris.

The protein resides in the secreted. In terms of biological role, inhibins and activins inhibit and activate, respectively, the secretion of follitropin by the pituitary gland. Inhibins/activins are involved in regulating a number of diverse functions such as hypothalamic and pituitary hormone secretion, gonadal hormone secretion, germ cell development and maturation, erythroid differentiation, insulin secretion, nerve cell survival, embryonic axial development or bone growth, depending on their subunit composition. Inhibins appear to oppose the functions of activins. Induces somatostatin in the ciliary ganglion neurons and may play a role in regulating neurotransmitter phenotype. The polypeptide is Inhibin beta A chain (INHBA) (Gallus gallus (Chicken)).